Here is a 1197-residue protein sequence, read N- to C-terminus: Neural cell adhesion molecule L1.1 (1197 aa).

Ig-like C2-type domains follow at residues 1–58, 69–160, 165–263, 268–355, and 360–442; these read EFRQ…TAVS, PSLA…EPMS, PSNS…YTVT, PYWT…THVH, and PAQI…KSIS. At 1–1054 the chain is on the extracellular side; that stretch reads EFRQRDPSPS…SPRNFATEGW (1054 aa). A disulfide bond links Cys92 and Cys143. Asn135, Asn149, Asn221, Asn298, Asn414, Asn421, Asn438, and Asn449 each carry an N-linked (GlcNAc...) asparagine glycan. 3 cysteine pairs are disulfide-bonded: Cys199-Cys247, Cys289-Cys339, and Cys383-Cys432. In terms of domain architecture, Ig-like C2-type 6 spans 451-541; sequence TKIVGPPQNL…DSDTASGYIT (91 aa). The cysteines at positions 472 and 525 are disulfide-linked. 5 consecutive Fibronectin type-III domains span residues 548-643, 645-742, 747-852, 853-952, and 953-1048; these read PPQS…TPAA, PDTN…SGED, APSA…TPEG, APGP…LLDG, and EPPS…SPRN. The segment covering 630 to 640 has biased composition (polar residues); sequence APTESSLSYST. Residues 630–655 form a disordered region; that stretch reads APTESSLSYSTPAAKPDTNPENVMTL. N-linked (GlcNAc...) asparagine glycosylation is present at Asn708. N-linked (GlcNAc...) asparagine glycans are attached at residues Asn959, Asn968, Asn1002, and Asn1027. A helical transmembrane segment spans residues 1055 to 1075; it reads FIGLISALVLLLLVLLLLCYI. Residues 1076–1197 are Cytoplasmic-facing; it reads KKSKGGKYSV…TSVTGILGPN (122 aa). Disordered regions lie at residues 1115-1135 and 1154-1197; these read MEKCSISQPSGCESKRSSNDS and IGQY…LGPN.

This sequence belongs to the immunoglobulin superfamily. L1/neurofascin/NgCAM family. Expressed in postmitotic neurons in 16-36 hours embryos, including those in the brain, cranial ganglia and otic and olfactory placodes, and in all classes of spinal neurons.

It is found in the cell membrane. The protein localises to the cell projection. It localises to the growth cone. Its function is as follows. Cell adhesion molecule with an important role in the development of the nervous system. Involved in neuron-neuron adhesion, neurite fasciculation, outgrowth of neurites, etc. Binds to axonin on neurons. The sequence is that of Neural cell adhesion molecule L1.1 (nadl1.1) from Danio rerio (Zebrafish).